The following is a 346-amino-acid chain: HLA class I histocompatibility antigen, alpha chain F (346 aa).

A signal peptide spans Met-1–Ala-21. Residues Gly-22–Ala-111 form an alpha-1 region. Residues Gly-22 to Ile-305 are Extracellular-facing. A peptide antigen-binding residues include Asn-91 and Arg-105. Residue Asn-107 is glycosylated (N-linked (GlcNAc...) asparagine). The segment at Gly-112–Ala-203 is alpha-2. 2 disulfide bridges follow: Cys-122–Cys-185 and Cys-224–Cys-280. A peptide antigen-binding residues include Thr-164, Tyr-168, and Glu-176. The interval Asp-204 to Trp-295 is alpha-3. The Ig-like C1-type domain maps to Pro-206 to Glu-296. The segment at Glu-296–Ile-305 is connecting peptide. Residues Val-306–Trp-329 traverse the membrane as a helical segment. Topologically, residues Arg-330 to Val-346 are cytoplasmic. A Sorting signal sequence; Golgi-retention signal; ER-retention signal motif is present at residues Arg-336–Arg-338.

The protein belongs to the MHC class I family. In terms of assembly, forms a heterotrimer with B2M and a self-peptide. Binds a diverse number of peptides ranging from 7 to more than 30 amino acids. Peptide-bound HLA-F-B2M interacts with LILRB1 and LILRB2 but not with KIR3DS1 or KIR3DL2; this interaction is direct. The OC form interacts with KIR3DS1, KIR2DS4 and KIR3DL2; this interaction is direct. Interacts with TAP1-TAP2 complex and CALR; this interaction is required for appropriate folding and peptide loading. Interacts with the coat protein complex II and 14-3-3 proteins; these interactions likely control the anterograde ER-to-Golgi transport of HLA-F. HLA-F-B2M complex interacts with the heavy chain of other MHC class I molecules including HLA-A and HLA-E; this interaction may regulate the intracellular trafficking and the stability of peptide-free MHC class I OCs. N-glycosylated. Expressed in resting B cells (at protein level). Expressed in secondary lymphoid organs rich in B and T cells such as the tonsils, spleen, and thymus (at protein level). Expressed in the endothelial cells of the tonsils. Expressed on activated lymphoid cells including B cells, NK cells, CD4+ T cells and memory T cells (at protein level). Expressed in motor neurons of spinal cord.

The protein resides in the cell membrane. It is found in the early endosome membrane. The protein localises to the lysosome membrane. Functionally, non-classical major histocompatibility class Ib molecule postulated to play a role in immune surveillance, immune tolerance and inflammation. Functions in two forms, as a heterotrimeric complex with B2M/beta-2 microglobulin and a peptide (peptide-bound HLA-F-B2M) and as an open conformer (OC) devoid of peptide and B2M (peptide-free OC). In complex with B2M, presents non-canonical self-peptides carrying post-translational modifications, particularly phosphorylated self-peptides. Peptide-bound HLA-F-B2M acts as a ligand for LILRB1 inhibitory receptor, a major player in maternal-fetal tolerance. Peptide-free OC acts as a ligand for KIR3DS1 and KIR3DL2 receptors. Upon interaction with activating KIR3DS1 receptor on NK cells, triggers NK cell degranulation and anti-viral cytokine production. Through interaction with KIR3DL2 receptor, inhibits NK and T cell effector functions. May interact with other MHC class I OCs to cross-present exogenous viral, tumor or minor histompatibility antigens to cytotoxic CD8+ T cells, triggering effector and memory responses. May play a role in inflammatory responses in the peripheral nervous system. Through interaction with KIR3DL2, may protect motor neurons from astrocyte-induced toxicity. This is HLA class I histocompatibility antigen, alpha chain F from Homo sapiens (Human).